Consider the following 107-residue polypeptide: 4-carboxymethyl-4-methylbutenolide mutase (107 aa).

Histidine 26 acts as the Proton donor/acceptor in catalysis. 2 residues coordinate 3-methylmuconolactone: histidine 26 and tyrosine 39. Positions 26 and 39 each coordinate 4-methylmuconolactone.

This sequence belongs to the MmlI family. As to quaternary structure, homodimer.

It catalyses the reaction 4-methylmuconolactone = 3-methylmuconolactone. Its activity is regulated as follows. Inhibited by p-chloromercuribenzoate. Functionally, isomerase involved in the degradation of 4-methylsalicylate and 5-methylsalicylate. Catalyzes the isomerization of the dead-end metabolite 4-methylmuconolactone (4-ML) to 3-methylmuconolactone (3-ML), which can then be further degraded through a modified 3-oxoadipate pathway. Can also use 1-methylbislactone but not 3-methyl-cis,cis-muconate. In Pseudomonas reinekei, this protein is 4-carboxymethyl-4-methylbutenolide mutase.